The following is an 884-amino-acid chain: Endoribonuclease ysh1 (884 aa).

The Zn(2+) site is built by His-83, His-85, Asp-87, His-88, His-174, and Asp-195. His-446 (proton donor) is an active-site residue. His-468 lines the Zn(2+) pocket. Disordered regions lie at residues 595–626 (EIGTDEDAEKEDQQSESEEKQRMKEEADEEIP), 678–705 (PASVKQSAKHNKHHHHHHHDETDTLKFL), and 734–780 (PIER…QDPD). Positions 605 to 619 (EDQQSESEEKQRMKE) are enriched in basic and acidic residues. Residues 684–695 (SAKHNKHHHHHH) are compositionally biased toward basic residues. A compositionally biased stretch (low complexity) spans 742-758 (SSTESATTTTNGNGNSK). Residues 762–780 (EQLSSLESKTDGATPQDPD) are compositionally biased toward polar residues.

Belongs to the metallo-beta-lactamase superfamily. RNA-metabolizing metallo-beta-lactamase-like family. CPSF2/YSH1 subfamily.

The protein resides in the nucleus. In terms of biological role, component of the cleavage factor I (CF I) involved in pre-mRNA 3'-end processing. This chain is Endoribonuclease ysh1 (ysh1), found in Emericella nidulans (strain FGSC A4 / ATCC 38163 / CBS 112.46 / NRRL 194 / M139) (Aspergillus nidulans).